The chain runs to 40 residues: Probable non-specific lipid-transfer protein (40 aa).

It belongs to the plant LTP family. Post-translationally, phosphorylated by Ca(2+)-dependent protein kinase.

Its function is as follows. Plant non-specific lipid-transfer proteins transfer phospholipids as well as galactolipids across membranes. May play a role in wax or cutin deposition in the cell walls of expanding epidermal cells and certain secretory tissues. The polypeptide is Probable non-specific lipid-transfer protein (Triticum aestivum (Wheat)).